The primary structure comprises 118 residues: Flowering-promoting factor 1-like protein 4 (118 aa).

It belongs to the FPF1 family.

In Oryza sativa subsp. japonica (Rice), this protein is Flowering-promoting factor 1-like protein 4.